The sequence spans 173 residues: Small ribosomal subunit protein uS11m (173 aa).

It belongs to the universal ribosomal protein uS11 family.

It localises to the mitochondrion. This is Small ribosomal subunit protein uS11m (RPS11) from Acanthamoeba castellanii (Amoeba).